Consider the following 201-residue polypeptide: Holliday junction branch migration complex subunit RuvA (201 aa).

Residues 1–64 are domain I; sequence MYEYIRGQFQ…EDFIGLYGFT (64 aa). The segment at 65–143 is domain II; it reads TKEELEMFKL…PDELTSEEEQ (79 aa). The segment at 144 to 152 is flexible linker; the sequence is LIEGINDNS. The interval 153–201 is domain III; sequence DYSFNINETLSALMALGYTEKEAQKALEKVDKTLSIENMIKESLKLLMR.

This sequence belongs to the RuvA family. Homotetramer. Forms an RuvA(8)-RuvB(12)-Holliday junction (HJ) complex. HJ DNA is sandwiched between 2 RuvA tetramers; dsDNA enters through RuvA and exits via RuvB. An RuvB hexamer assembles on each DNA strand where it exits the tetramer. Each RuvB hexamer is contacted by two RuvA subunits (via domain III) on 2 adjacent RuvB subunits; this complex drives branch migration. In the full resolvosome a probable DNA-RuvA(4)-RuvB(12)-RuvC(2) complex forms which resolves the HJ.

It is found in the cytoplasm. Its function is as follows. The RuvA-RuvB-RuvC complex processes Holliday junction (HJ) DNA during genetic recombination and DNA repair, while the RuvA-RuvB complex plays an important role in the rescue of blocked DNA replication forks via replication fork reversal (RFR). RuvA specifically binds to HJ cruciform DNA, conferring on it an open structure. The RuvB hexamer acts as an ATP-dependent pump, pulling dsDNA into and through the RuvAB complex. HJ branch migration allows RuvC to scan DNA until it finds its consensus sequence, where it cleaves and resolves the cruciform DNA. This Clostridium perfringens (strain SM101 / Type A) protein is Holliday junction branch migration complex subunit RuvA.